A 201-amino-acid chain; its full sequence is Recombination protein RecR (201 aa).

Residues 59–74 (CEICGNMDTENMCRIC) form a C4-type zinc finger. Residues 82–177 (SIIAIVETVA…KISRLASGIP (96 aa)) form the Toprim domain.

This sequence belongs to the RecR family.

Functionally, may play a role in DNA repair. It seems to be involved in an RecBC-independent recombinational process of DNA repair. It may act with RecF and RecO. The protein is Recombination protein RecR of Rickettsia africae (strain ESF-5).